An 87-amino-acid polypeptide reads, in one-letter code: UPF0386 protein RSKD131_0371 (87 aa).

It belongs to the UPF0386 family.

In Cereibacter sphaeroides (strain KD131 / KCTC 12085) (Rhodobacter sphaeroides), this protein is UPF0386 protein RSKD131_0371.